The primary structure comprises 442 residues: Testican-1 (442 aa).

The N-terminal stretch at 1–21 (MPAIAVLAAAAAAWCFLQVDS) is a signal peptide. 8 disulfide bridges follow: Cys-89–Cys-100, Cys-94–Cys-110, Cys-139–Cys-169, Cys-142–Cys-162, Cys-151–Cys-183, Cys-316–Cys-340, Cys-351–Cys-358, and Cys-360–Cys-379. In terms of domain architecture, Kazal-like spans 133 to 185 (PSNLVKCKPCPVAQSAMVCGSDGHTYTSKCKLEFHACSTGKSLNSLCDGPCPC). The Thyroglobulin type-1 domain maps to 313–379 (GLPCQNEMNR…GSRKQGTVSC (67 aa)). Disordered stretches follow at residues 375–395 (GTVS…GGSV) and 420–442 (TRAV…GYIW). O-linked (Xyl...) (glycosaminoglycan) serine glycosylation is found at Ser-386 and Ser-391. A compositionally biased stretch (acidic residues) spans 425–442 (EDDEDEDDDKEDEVGYIW).

In terms of processing, contains chondroitin sulfate and heparan sulfate O-linked oligosaccharides. In terms of tissue distribution, predominantly expressed in the postsynaptic area of pyramidal neurons.

Its subcellular location is the secreted. It is found in the extracellular space. It localises to the extracellular matrix. In terms of biological role, may play a role in cell-cell and cell-matrix interactions. May contribute to various neuronal mechanisms in the central nervous system. This chain is Testican-1 (Spock1), found in Mus musculus (Mouse).